The primary structure comprises 159 residues: Protein NrdI (159 aa).

It belongs to the NrdI family.

In terms of biological role, probably involved in ribonucleotide reductase function. The chain is Protein NrdI from Rhodococcus erythropolis (strain PR4 / NBRC 100887).